Consider the following 456-residue polypeptide: UDP-N-acetylmuramoylalanine--D-glutamate ligase (456 aa).

Position 121-127 (121-127) interacts with ATP; it reads GTNGKTT.

Belongs to the MurCDEF family.

It is found in the cytoplasm. It carries out the reaction UDP-N-acetyl-alpha-D-muramoyl-L-alanine + D-glutamate + ATP = UDP-N-acetyl-alpha-D-muramoyl-L-alanyl-D-glutamate + ADP + phosphate + H(+). It functions in the pathway cell wall biogenesis; peptidoglycan biosynthesis. Cell wall formation. Catalyzes the addition of glutamate to the nucleotide precursor UDP-N-acetylmuramoyl-L-alanine (UMA). This chain is UDP-N-acetylmuramoylalanine--D-glutamate ligase, found in Desulfotalea psychrophila (strain LSv54 / DSM 12343).